Here is a 394-residue protein sequence, read N- to C-terminus: Glycogen synthase kinase 1 (394 aa).

Positions 35–318 constitute a Protein kinase domain; it reads YTQCKIVGNG…AIDAMVHPFF (284 aa). Residues 41–49 and Lys-64 each bind ATP; that span reads VGNGSFGVV.

The protein belongs to the protein kinase superfamily. CMGC Ser/Thr protein kinase family. GSK-3 subfamily.

It localises to the cytoplasm. The enzyme catalyses L-seryl-[protein] + ATP = O-phospho-L-seryl-[protein] + ADP + H(+). In terms of biological role, protein kinase that acts downstream of the MPS1 MAPK cascade as a highly conservative signal modulator that dictates growth, conidiation and pathogenicity. Phosphorylates HAT1 at 'Ser-8' to block its translocation from the nucleus to the cytoplasm where HAT1 positively regulates appressorium development and pathogenicity. This Pyricularia oryzae (Rice blast fungus) protein is Glycogen synthase kinase 1.